Here is a 62-residue protein sequence, read N- to C-terminus: Neurotoxin 3 (62 aa).

Residues 1 to 16 (LECHDQQSSQTPTTTG) show a composition bias toward polar residues. The segment at 1-22 (LECHDQQSSQTPTTTGCSGGET) is disordered. Intrachain disulfides connect C3/C24, C17/C41, C43/C54, and C55/C60.

The protein belongs to the three-finger toxin family. Short-chain subfamily. Type I alpha-neurotoxin sub-subfamily. In terms of tissue distribution, expressed by the venom gland.

It localises to the secreted. Binds to muscle nicotinic acetylcholine receptor (nAChR) and inhibit acetylcholine from binding to the receptor, thereby impairing neuromuscular transmission. The protein is Neurotoxin 3 of Naja sputatrix (Malayan spitting cobra).